We begin with the raw amino-acid sequence, 319 residues long: ATP-dependent 6-phosphofructokinase (319 aa).

Residue Gly11 coordinates ATP. 21–25 (RAVVR) contributes to the ADP binding site. ATP contacts are provided by residues 72–73 (RC) and 102–105 (GDGS). Mg(2+) is bound at residue Asp103. 125–127 (TID) serves as a coordination point for substrate. Catalysis depends on Asp127, which acts as the Proton acceptor. Arg154 contributes to the ADP binding site. Substrate-binding positions include Arg162 and 169-171 (MGR). ADP is bound by residues 185 to 187 (GAE), Arg211, and 213 to 215 (KKH). Residues Glu222, Arg243, and 249–252 (HVQR) each bind substrate.

It belongs to the phosphofructokinase type A (PFKA) family. ATP-dependent PFK group I subfamily. Prokaryotic clade 'B1' sub-subfamily. In terms of assembly, homotetramer. The cofactor is Mg(2+).

The protein resides in the cytoplasm. It catalyses the reaction beta-D-fructose 6-phosphate + ATP = beta-D-fructose 1,6-bisphosphate + ADP + H(+). Its pathway is carbohydrate degradation; glycolysis; D-glyceraldehyde 3-phosphate and glycerone phosphate from D-glucose: step 3/4. Its activity is regulated as follows. Allosterically activated by ADP and other diphosphonucleosides, and allosterically inhibited by phosphoenolpyruvate. Its function is as follows. Catalyzes the phosphorylation of D-fructose 6-phosphate to fructose 1,6-bisphosphate by ATP, the first committing step of glycolysis. This Bacillus cereus (strain ATCC 14579 / DSM 31 / CCUG 7414 / JCM 2152 / NBRC 15305 / NCIMB 9373 / NCTC 2599 / NRRL B-3711) protein is ATP-dependent 6-phosphofructokinase.